Here is a 95-residue protein sequence, read N- to C-terminus: Aspartyl/glutamyl-tRNA(Asn/Gln) amidotransferase subunit C (95 aa).

The protein belongs to the GatC family. As to quaternary structure, heterotrimer of A, B and C subunits.

The enzyme catalyses L-glutamyl-tRNA(Gln) + L-glutamine + ATP + H2O = L-glutaminyl-tRNA(Gln) + L-glutamate + ADP + phosphate + H(+). It carries out the reaction L-aspartyl-tRNA(Asn) + L-glutamine + ATP + H2O = L-asparaginyl-tRNA(Asn) + L-glutamate + ADP + phosphate + 2 H(+). In terms of biological role, allows the formation of correctly charged Asn-tRNA(Asn) or Gln-tRNA(Gln) through the transamidation of misacylated Asp-tRNA(Asn) or Glu-tRNA(Gln) in organisms which lack either or both of asparaginyl-tRNA or glutaminyl-tRNA synthetases. The reaction takes place in the presence of glutamine and ATP through an activated phospho-Asp-tRNA(Asn) or phospho-Glu-tRNA(Gln). The chain is Aspartyl/glutamyl-tRNA(Asn/Gln) amidotransferase subunit C from Nitrobacter hamburgensis (strain DSM 10229 / NCIMB 13809 / X14).